Reading from the N-terminus, the 415-residue chain is SVF1-like protein YDR222W (415 aa).

The protein belongs to the SVF1 family.

Its subcellular location is the cytoplasm. This chain is SVF1-like protein YDR222W, found in Saccharomyces cerevisiae (strain ATCC 204508 / S288c) (Baker's yeast).